The following is a 125-amino-acid chain: Small ribosomal subunit protein uS13 (125 aa).

The protein belongs to the universal ribosomal protein uS13 family. As to quaternary structure, part of the 30S ribosomal subunit. Forms a loose heterodimer with protein S19. Forms two bridges to the 50S subunit in the 70S ribosome.

Located at the top of the head of the 30S subunit, it contacts several helices of the 16S rRNA. In the 70S ribosome it contacts the 23S rRNA (bridge B1a) and protein L5 of the 50S subunit (bridge B1b), connecting the 2 subunits; these bridges are implicated in subunit movement. Contacts the tRNAs in the A and P-sites. The chain is Small ribosomal subunit protein uS13 from Rickettsia massiliae (strain Mtu5).